A 357-amino-acid polypeptide reads, in one-letter code: F-box only protein 25 (357 aa).

The tract at residues 1-83 (MPFLGQDWRS…DTAAHSFYRE (83 aa)) is interaction with beta-actin. The F-box domain maps to 224-271 (GLTLSDLPLHMLNNILYRFSDGWDIVTLGQVTPTLYMLSEDRRLWKRL).

As to quaternary structure, part of a SCF (SKP1-cullin-F-box) protein ligase complex consisting of FBXO25, SKP1, CUL1 and RBX1. Interacts directly with SKP1 and CUL1. Interacts (via C-terminus) with actin (via N-terminus).

It is found in the nucleus. It functions in the pathway protein modification; protein ubiquitination. Functionally, substrate-recognition component of the SCF (SKP1-CUL1-F-box protein)-type E3 ubiquitin ligase complex. May play a role in accumulation of expanded polyglutamine (polyQ) protein huntingtin (HTT). The protein is F-box only protein 25 (Fbxo25) of Rattus norvegicus (Rat).